The primary structure comprises 781 residues: N-acetylneuraminate (7)9-O-acetyltransferase (781 aa).

Residues 1-15 lie on the Cytoplasmic side of the membrane; that stretch reads MAVLAYNLGKREINQ. A helical transmembrane segment spans residues 16–36; it reads YFSIKNAKLLAAAAVVLLTVF. Topologically, residues 37–308 are lumenal; it reads HAASRHYGSS…SAPPLSVLQK (272 aa). Catalysis depends on Ser-94, which acts as the Acyl-ester intermediate. Asn-139, Asn-185, and Asn-239 each carry an N-linked (GlcNAc...) asparagine glycan. Active-site residues include Asp-264 and His-267. The chain crosses the membrane as a helical span at residues 309-329; it reads LAAAVLLVSVVCFVLLGFSSH. A disordered region spans residues 330 to 350; the sequence is RKSRPAPDVESGEEKKHPAAV. At 330-354 the chain is on the cytoplasmic side; it reads RKSRPAPDVESGEEKKHPAAVGQLN. The helical transmembrane segment at 355 to 375 threads the bilayer; it reads PKGPLLAIGKMSLIMLYFYLC. Topologically, residues 376-386 are lumenal; that stretch reads DRADIFMKEQK. A helical transmembrane segment spans residues 387–407; sequence FYTHSAFFIPLIYIFVLGVFY. Residues 408 to 430 lie on the Cytoplasmic side of the membrane; it reads SENSKETKLLNREQTDEWKGWMQ. A helical transmembrane segment spans residues 431–451; it reads LVILIYHISGASAFIPVYMHV. Position 452 (Arg-452) is a topological domain, lumenal. A helical membrane pass occupies residues 453–473; that stretch reads VLVAAYLFQTGYGHFSFFWLK. At 474 to 477 the chain is on the cytoplasmic side; it reads GDFG. A helical transmembrane segment spans residues 478–498; it reads LYRVCQVLFRLNFLVVVLCLV. Residues 499-504 lie on the Lumenal side of the membrane; it reads MDRPYQ. A helical transmembrane segment spans residues 505–525; that stretch reads FYYFVPLVTFWFAVIYATMAL. Residues 526-537 lie on the Cytoplasmic side of the membrane; the sequence is WPQILQKQANGS. A helical transmembrane segment spans residues 538–558; it reads AFWNLALLLKLLGLLLFIGFF. Over 559–595 the chain is Lumenal; the sequence is AYSQELFEGIFSVWPLSKLFELQGSIHEWWFRWKLDR. The chain crosses the membrane as a helical span at residues 596-616; the sequence is FAVVNGMLFAFIYLLLQKYQL. The Cytoplasmic portion of the chain corresponds to 617–629; sequence LSEGKGEPLFSNK. A helical membrane pass occupies residues 630–650; that stretch reads ISNCLLFVSVVSFMTYSIWAS. Topologically, residues 651-660 are lumenal; that stretch reads GCKNKSECNE. Asn-654 carries N-linked (GlcNAc...) asparagine glycosylation. The chain crosses the membrane as a helical span at residues 661–681; it reads MHPYISVILAFILIRNIPGYA. Over 682 to 687 the chain is Cytoplasmic; that stretch reads RSLYSS. A helical membrane pass occupies residues 688 to 708; the sequence is FFAWFGKISLELFICQYHIWL. Topologically, residues 709-714 are lumenal; that stretch reads AADTKG. The chain crosses the membrane as a helical span at residues 715-735; that stretch reads ILVLIPGNPTLNIIVSTFIFV. The Cytoplasmic portion of the chain corresponds to 736–756; that stretch reads CVAHEISQITNDLAQVAIPKE. A helical membrane pass occupies residues 757-777; the sequence is SGPLLKRLLGAGVFLVLVLTL. Residues 778 to 781 are Lumenal-facing; it reads SQKD.

Belongs to the PC-esterase family. CASD1 subfamily.

The protein resides in the golgi apparatus membrane. It carries out the reaction CMP-N-acetyl-beta-neuraminate + acetyl-CoA = CMP-N-acetyl-9-O-acetyl-beta-neuraminate + CoA. It catalyses the reaction a ganglioside GD3 (d18:1(4E)) + acetyl-CoA = a ganglioside Ac-O-7-GD3(d18:1(4E)) + CoA. The catalysed reaction is CMP-N-acetyl-beta-neuraminate + acetyl-CoA = CMP-N-acetyl-7-O-acetyl-beta-neuraminate + CoA. Its function is as follows. Key enzyme in the biosynthesis of O-acetylated (O-Ac) sialoglycans such as gangliosides O-AcGD3 and O-AcGD2, which affect various processes such as cell-cell interactions, host-pathogen recognition. Catalyzes the transfer of an acetyl group from a donor, the acetyl-coenzyme-A molecule (acetyl-CoA), to the C7/8/9 OH-position of a sialic acid residue. The primary site of O-acetyl group transfer on sialic acid seems to depend on cell type and can be C7, from which the O-acetyl group could subsequently migrate to the C8 and then to the C9 position, or at C9 with possibility of migrating to the C8 and then to the C7 position. Together with ST8SIA1 (GD3 synthase) it increases the levels of ganglioside Ac-O-7-GD3. Can transfer the acetyl group from acetyl-CoA to free sialate (N-acetylneuraminate, Neu5Ac) in vitro, but has preferred substrate specificity for CMP-activated sialate (CMP-Neu5Ac), resulting in the formation of 9-O-acetylated CMP-Neu5Ac (CMP-Neu5,9Ac2). CMP-Neu5,9Ac2 may be used by sialyltransferases as a sialate donor for glycoconjugate acceptors such as ganglioside GD3. O-acetylation at position C9 of ganglioside GD3 can counteract the pro-apoptotic effects of the ganglioside GD3 in tumor cells. The protein is N-acetylneuraminate (7)9-O-acetyltransferase of Danio rerio (Zebrafish).